The primary structure comprises 413 residues: Synaptosomal-associated protein 47 (413 aa).

The t-SNARE coiled-coil homology 1 domain occupies 109-171 (AANIPSHVTR…DVADRLLTEL (63 aa)). Positions 321-342 (RHAASRPKGCTPHRELPTGGQE) are disordered. Residues 350 to 412 (KNLPLFSEGE…DKQNRRMRKL (63 aa)) enclose the t-SNARE coiled-coil homology 2 domain.

The protein belongs to the SVAP1 family. As to quaternary structure, associates with the BLOC-1 complex. Interacts with BLOC1S6. Forms a complex containing SNAP47, VAMP2 and STX1A. As to expression, ubiquitously expressed with the most abundant expression in the brain. In brain, most highly expressed in the glomerular layer of the olfactory bulb, the cortex, striatum, hippocampus, and colliculi (at protein level).

It is found in the endomembrane system. It localises to the cytoplasm. Its subcellular location is the perinuclear region. Functionally, may play a role in intracellular membrane fusion. The sequence is that of Synaptosomal-associated protein 47 (Snap47) from Mus musculus (Mouse).